A 288-amino-acid chain; its full sequence is Protein PXR1 (288 aa).

Positions 25–72 (QSRFGHKHLMRFGWQPGQGLGTQPVQSMKTHIKVSIKDDNLGLGAKLK) constitute a G-patch domain. A disordered region spans residues 147–258 (SYSQMEKDSS…TSIPESVSTR (112 aa)). The segment covering 157–166 (SDEESDDDED) has biased composition (acidic residues). Composition is skewed to basic residues over residues 169-185 (KKHKIEKKEAKKSKKRK) and 195-214 (KKKKKSKKDKKEKKSKKDKK). Residues 238–256 (RTASIESSTSATSIPESVS) are compositionally biased toward low complexity.

It belongs to the PINX1 family.

The protein resides in the nucleus. It is found in the nucleolus. Functionally, involved in rRNA-processing at A0, A1 and A2 sites and negatively regulates telomerase. This chain is Protein PXR1 (PXR1), found in Candida glabrata (strain ATCC 2001 / BCRC 20586 / JCM 3761 / NBRC 0622 / NRRL Y-65 / CBS 138) (Yeast).